The chain runs to 338 residues: D-erythrose-4-phosphate dehydrogenase (338 aa).

Residue 11-12 coordinates NAD(+); the sequence is RI. Substrate contacts are provided by residues 153 to 155, R199, 212 to 213, and R235; these read SCT and TK. C154 acts as the Nucleophile in catalysis. NAD(+) is bound at residue N317.

The protein belongs to the glyceraldehyde-3-phosphate dehydrogenase family. Epd subfamily. In terms of assembly, homotetramer.

It is found in the cytoplasm. It carries out the reaction D-erythrose 4-phosphate + NAD(+) + H2O = 4-phospho-D-erythronate + NADH + 2 H(+). It functions in the pathway cofactor biosynthesis; pyridoxine 5'-phosphate biosynthesis; pyridoxine 5'-phosphate from D-erythrose 4-phosphate: step 1/5. Its function is as follows. Catalyzes the NAD-dependent conversion of D-erythrose 4-phosphate to 4-phosphoerythronate. This chain is D-erythrose-4-phosphate dehydrogenase, found in Shewanella oneidensis (strain ATCC 700550 / JCM 31522 / CIP 106686 / LMG 19005 / NCIMB 14063 / MR-1).